Here is a 311-residue protein sequence, read N- to C-terminus: Methionyl-tRNA formyltransferase (311 aa).

Position 112–115 (112–115) interacts with (6S)-5,6,7,8-tetrahydrofolate; it reads SLLP.

This sequence belongs to the Fmt family.

The catalysed reaction is L-methionyl-tRNA(fMet) + (6R)-10-formyltetrahydrofolate = N-formyl-L-methionyl-tRNA(fMet) + (6S)-5,6,7,8-tetrahydrofolate + H(+). Attaches a formyl group to the free amino group of methionyl-tRNA(fMet). The formyl group appears to play a dual role in the initiator identity of N-formylmethionyl-tRNA by promoting its recognition by IF2 and preventing the misappropriation of this tRNA by the elongation apparatus. The sequence is that of Methionyl-tRNA formyltransferase from Chelativorans sp. (strain BNC1).